Here is a 368-residue protein sequence, read N- to C-terminus: Alanine racemase (368 aa).

Catalysis depends on Lys-34, which acts as the Proton acceptor; specific for D-alanine. Position 34 is an N6-(pyridoxal phosphate)lysine (Lys-34). Residue Arg-132 participates in substrate binding. Tyr-261 acts as the Proton acceptor; specific for L-alanine in catalysis. Met-309 contributes to the substrate binding site.

The protein belongs to the alanine racemase family. Pyridoxal 5'-phosphate is required as a cofactor.

It catalyses the reaction L-alanine = D-alanine. It functions in the pathway amino-acid biosynthesis; D-alanine biosynthesis; D-alanine from L-alanine: step 1/1. Functionally, catalyzes the interconversion of L-alanine and D-alanine. May also act on other amino acids. The sequence is that of Alanine racemase (alr) from Carboxydothermus hydrogenoformans (strain ATCC BAA-161 / DSM 6008 / Z-2901).